The sequence spans 1349 residues: Protein strawberry notch homolog 2 (1349 aa).

Disordered regions lie at residues 170–212 (YQSH…QHPD), 609–633 (STRR…PKAS), and 1319–1349 (PTET…FPNS). Positions 177–188 (EEEEGEEEEETE) are enriched in acidic residues. Positions 609-631 (STRRRRDRGGGKRKRRPRGRGPK) are enriched in basic residues.

The protein belongs to the SBNO family. In terms of assembly, interacts with TAL1; this interaction inhibits TAL1 occupancy of the DCSTAMP promoter, leading to the activation of the DCSTAMP promoter by the transcription factor MITF. In terms of tissue distribution, expressed in the spleen and bone marrow, and to a lesser extent in the kidney, liver, brain, skin, heart and muscle. Expressed predominantly in osteoclasts, and to a lesser extent in T-cells, B-cells and osteoblasts. Expressed in macrophages.

Functionally, acts as a transcriptional coregulator, that can have both coactivator and corepressor functions. Inhibits the DCSTAMP-repressive activity of TAL1, hence enhancing the access of the transcription factor MITF to the DC-STAMP promoter in osteoclast. Plays a role in bone homeostasis; required as a positive regulator in TNFSF11//RANKL-mediated osteoclast fusion via a DCSTAMP-dependent pathway. May also be required in the regulation of osteoblast differentiation. Involved in the transcriptional corepression of NF-kappaB in macrophages. Plays a role as a regulator in the pro-inflammatory cascade. The sequence is that of Protein strawberry notch homolog 2 (Sbno2) from Mus musculus (Mouse).